Here is a 295-residue protein sequence, read N- to C-terminus: GTPase Era (295 aa).

The Era-type G domain occupies 7-176 (KTISVCIIGR…IKSKAKVSPW (170 aa)). The tract at residues 15-22 (GRPNSGKS) is G1. 15–22 (GRPNSGKS) contacts GTP. A G2 region spans residues 41–45 (QTTRS). A G3 region spans residues 62 to 65 (DTPG). Residues 62–66 (DTPGI) and 124–127 (NKID) contribute to the GTP site. The G4 stretch occupies residues 124–127 (NKID). Residues 152–154 (ISA) form a G5 region. Residues 204 to 281 (LQQELPYKLT…HLFLFVKVHA (78 aa)) enclose the KH type-2 domain.

This sequence belongs to the TRAFAC class TrmE-Era-EngA-EngB-Septin-like GTPase superfamily. Era GTPase family. As to quaternary structure, monomer.

It localises to the cytoplasm. It is found in the cell inner membrane. An essential GTPase that binds both GDP and GTP, with rapid nucleotide exchange. Plays a role in 16S rRNA processing and 30S ribosomal subunit biogenesis and possibly also in cell cycle regulation and energy metabolism. The sequence is that of GTPase Era from Rickettsia prowazekii (strain Madrid E).